The chain runs to 116 residues: Tachykinin-3 (116 aa).

The N-terminal stretch at 1–20 (MRSAMLFAAVLALSLAWTFG) is a signal peptide. A propeptide spanning residues 21 to 79 (AACEEPQEQGGRLSKDSDLSLLPPPLLRRLYDSRSISLEGLLKVLSKASVGPKETSLPQ) is cleaved from the precursor. Methionine amide is present on methionine 91. A disordered region spans residues 92-116 (GKRNSQPDTPADVVEENTPSFGVLK). Positions 95-116 (NSQPDTPADVVEENTPSFGVLK) are excised as a propeptide.

The protein belongs to the tachykinin family.

It localises to the secreted. Tachykinins are active peptides which excite neurons, evoke behavioral responses, are potent vasodilators and secretagogues, and contract (directly or indirectly) many smooth muscles. Is a critical central regulator of gonadal function. In Rattus norvegicus (Rat), this protein is Tachykinin-3 (Tac3).